A 323-amino-acid polypeptide reads, in one-letter code: HPr kinase/phosphorylase (323 aa).

Residues His-142 and Lys-163 contribute to the active site. Residue 157–164 participates in ATP binding; it reads GESGVGKS. Mg(2+) is bound at residue Ser-164. The active-site Proton acceptor; for phosphorylation activity. Proton donor; for dephosphorylation activity is Asp-181. Residues 205 to 214 form an important for the catalytic mechanism of both phosphorylation and dephosphorylation region; that stretch reads LEVRGLGMLN. Glu-206 serves as a coordination point for Mg(2+). Arg-249 is a catalytic residue. The interval 270 to 275 is important for the catalytic mechanism of dephosphorylation; sequence PVAAGR.

Belongs to the HPrK/P family. Homohexamer. The cofactor is Mg(2+).

It catalyses the reaction [HPr protein]-L-serine + ATP = [HPr protein]-O-phospho-L-serine + ADP + H(+). It carries out the reaction [HPr protein]-O-phospho-L-serine + phosphate + H(+) = [HPr protein]-L-serine + diphosphate. In terms of biological role, catalyzes the ATP- as well as the pyrophosphate-dependent phosphorylation of a specific serine residue in HPr, a phosphocarrier protein of the phosphoenolpyruvate-dependent sugar phosphotransferase system (PTS). HprK/P also catalyzes the pyrophosphate-producing, inorganic phosphate-dependent dephosphorylation (phosphorolysis) of seryl-phosphorylated HPr (P-Ser-HPr). The polypeptide is HPr kinase/phosphorylase (Nitrosomonas europaea (strain ATCC 19718 / CIP 103999 / KCTC 2705 / NBRC 14298)).